Here is a 148-residue protein sequence, read N- to C-terminus: Pivalyl-CoA mutase small subunit (148 aa).

Residues 8 to 138 (PLRVLVTKIG…TALGQKSRAE (131 aa)) form the B12-binding domain. An adenosylcob(III)alamin-binding site is contributed by His-21.

The protein belongs to the acyl-CoA mutase small subunit family. As to quaternary structure, monomer in the absence of the PCM large subunit. Weakly interacts with the PCM large subunit; an alpha(2)beta(2) stoichiometry seems to represent the active state of the enzyme. It depends on adenosylcob(III)alamin as a cofactor.

It catalyses the reaction 3-methylbutanoyl-CoA = 2,2-dimethylpropanoyl-CoA. In terms of biological role, together with Xaut_5043, catalyzes the reversible isomerization between pivalyl-CoA and isovaleryl-CoA, using radical chemistry. Does not exhibit isobutyryl-CoA mutase (ICM) activity. This is Pivalyl-CoA mutase small subunit from Xanthobacter autotrophicus (strain ATCC BAA-1158 / Py2).